The chain runs to 215 residues: 3-demethoxyubiquinol 3-hydroxylase (215 aa).

Fe cation contacts are provided by Glu64, Glu94, His97, Glu146, Glu178, and His181.

It belongs to the COQ7 family. Requires Fe cation as cofactor.

It is found in the cell membrane. The enzyme catalyses a 5-methoxy-2-methyl-3-(all-trans-polyprenyl)benzene-1,4-diol + AH2 + O2 = a 3-demethylubiquinol + A + H2O. It functions in the pathway cofactor biosynthesis; ubiquinone biosynthesis. Functionally, catalyzes the hydroxylation of 2-nonaprenyl-3-methyl-6-methoxy-1,4-benzoquinol during ubiquinone biosynthesis. In Stutzerimonas stutzeri (strain A1501) (Pseudomonas stutzeri), this protein is 3-demethoxyubiquinol 3-hydroxylase.